Here is a 266-residue protein sequence, read N- to C-terminus: F-actin-capping protein subunit beta (266 aa).

Belongs to the F-actin-capping protein beta subunit family. As to quaternary structure, component of the F-actin capping complex, composed of a heterodimer of an alpha and a beta subunit.

It localises to the cytoplasm. The protein resides in the cytoskeleton. Its subcellular location is the actin patch. In terms of biological role, F-actin-capping proteins bind in a Ca(2+)-independent manner to the fast growing ends of actin filaments (barbed end) thereby blocking the exchange of subunits at these ends. Unlike other capping proteins (such as gelsolin and severin), these proteins do not sever actin filaments. The chain is F-actin-capping protein subunit beta (cap2) from Aspergillus oryzae (strain ATCC 42149 / RIB 40) (Yellow koji mold).